The following is a 201-amino-acid chain: NADH-quinone oxidoreductase subunit B 1 (201 aa).

[4Fe-4S] cluster-binding residues include cysteine 80, cysteine 81, cysteine 145, and cysteine 175.

This sequence belongs to the complex I 20 kDa subunit family. As to quaternary structure, NDH-1 is composed of 14 different subunits. Subunits NuoB, C, D, E, F, and G constitute the peripheral sector of the complex. [4Fe-4S] cluster is required as a cofactor.

It is found in the cell inner membrane. The catalysed reaction is a quinone + NADH + 5 H(+)(in) = a quinol + NAD(+) + 4 H(+)(out). NDH-1 shuttles electrons from NADH, via FMN and iron-sulfur (Fe-S) centers, to quinones in the respiratory chain. The immediate electron acceptor for the enzyme in this species is believed to be ubiquinone. Couples the redox reaction to proton translocation (for every two electrons transferred, four hydrogen ions are translocated across the cytoplasmic membrane), and thus conserves the redox energy in a proton gradient. The polypeptide is NADH-quinone oxidoreductase subunit B 1 (Rhodopseudomonas palustris (strain BisB18)).